The sequence spans 132 residues: Small ribosomal subunit protein uS8 (132 aa).

Belongs to the universal ribosomal protein uS8 family. In terms of assembly, part of the 30S ribosomal subunit. Contacts proteins S5 and S12.

One of the primary rRNA binding proteins, it binds directly to 16S rRNA central domain where it helps coordinate assembly of the platform of the 30S subunit. This chain is Small ribosomal subunit protein uS8, found in Mycobacterium bovis (strain ATCC BAA-935 / AF2122/97).